Consider the following 208-residue polypeptide: Probable GTP-binding protein EngB (208 aa).

Positions 22-195 constitute an EngB-type G domain; it reads GLPEIALAGR…WGALEDIFVE (174 aa). GTP-binding positions include 30–37, 57–61, 75–78, 142–145, and 174–176; these read GRSNVGKS, GKTRT, DLPG, TKSD, and ISS. 2 residues coordinate Mg(2+): serine 37 and threonine 59.

This sequence belongs to the TRAFAC class TrmE-Era-EngA-EngB-Septin-like GTPase superfamily. EngB GTPase family. It depends on Mg(2+) as a cofactor.

Necessary for normal cell division and for the maintenance of normal septation. This is Probable GTP-binding protein EngB from Alkaliphilus metalliredigens (strain QYMF).